Reading from the N-terminus, the 719-residue chain is Glycine--tRNA ligase beta subunit (719 aa).

The segment at 65 to 84 is disordered; it reads PDREEEIKGPPAKAAFKDGK.

It belongs to the class-II aminoacyl-tRNA synthetase family. In terms of assembly, tetramer of two alpha and two beta subunits.

The protein resides in the cytoplasm. It carries out the reaction tRNA(Gly) + glycine + ATP = glycyl-tRNA(Gly) + AMP + diphosphate. In Trichodesmium erythraeum (strain IMS101), this protein is Glycine--tRNA ligase beta subunit.